The chain runs to 372 residues: MLVAVVKELKQGEGRVACTPENVRKLTAAGHKVIVEKNAGIGSGFSNDMYEKEGAKIVTHEQAWEADLVIKVKEPHESEYQYFKKNQIIWGFLHLASSKEIVEKMQGVGVIAISGETIIKNGKAELLAPMSAIAGQRSAIMGAYYSEAQHGGQGTLVTGVHENVDIPGSTYVIFGGGVAATNAANVALGLNAKVIIIELNDDRIKYLEDMYAEKDVTVVKSTPENLAEQIKKADVFISTILIPGAKPPKLVTREMVKSMKKGSVLIDIAIDQGGTIETIRPTTISDPVYEEEGVIHYGVPNQPGAVPRTSTMALAQGNIDYILEICDKGLEQAIKDNEALSAGVNIYQGQETNQGLATSHDLDYKEILNVIE.

Histidine 94 is a catalytic residue. Position 170-200 (170-200 (TYVIFGGGVAATNAANVALGLNAKVIIIELN)) interacts with NAD(+).

It belongs to the AlaDH/PNT family.

It catalyses the reaction L-alanine + NAD(+) + H2O = pyruvate + NH4(+) + NADH + H(+). It functions in the pathway amino-acid degradation; L-alanine degradation via dehydrogenase pathway; NH(3) and pyruvate from L-alanine: step 1/1. Functionally, may play a role in cell wall synthesis as L-alanine is an important constituent of the peptidoglycan layer. The sequence is that of Alanine dehydrogenase 1 (ald1) from Staphylococcus aureus (strain bovine RF122 / ET3-1).